The sequence spans 84 residues: Cytochrome b559 subunit alpha (84 aa).

The chain crosses the membrane as a helical span at residues 22-36; that stretch reads IIHSITIPALFVAGW. Residue H24 participates in heme binding.

Belongs to the PsbE/PsbF family. In terms of assembly, heterodimer of an alpha subunit and a beta subunit. PSII is composed of 1 copy each of membrane proteins PsbA, PsbB, PsbC, PsbD, PsbE, PsbF, PsbH, PsbI, PsbJ, PsbK, PsbL, PsbM, PsbT, PsbX, PsbY, PsbZ, Psb30/Ycf12, at least 3 peripheral proteins of the oxygen-evolving complex and a large number of cofactors. It forms dimeric complexes. Requires heme b as cofactor.

It localises to the plastid. Its subcellular location is the chloroplast thylakoid membrane. In terms of biological role, this b-type cytochrome is tightly associated with the reaction center of photosystem II (PSII). PSII is a light-driven water:plastoquinone oxidoreductase that uses light energy to abstract electrons from H(2)O, generating O(2) and a proton gradient subsequently used for ATP formation. It consists of a core antenna complex that captures photons, and an electron transfer chain that converts photonic excitation into a charge separation. The chain is Cytochrome b559 subunit alpha from Guillardia theta (Cryptophyte).